A 340-amino-acid chain; its full sequence is Phenylalanine--tRNA ligase alpha subunit (340 aa).

Glutamate 254 provides a ligand contact to Mg(2+).

It belongs to the class-II aminoacyl-tRNA synthetase family. Phe-tRNA synthetase alpha subunit type 1 subfamily. As to quaternary structure, tetramer of two alpha and two beta subunits. The cofactor is Mg(2+).

Its subcellular location is the cytoplasm. The catalysed reaction is tRNA(Phe) + L-phenylalanine + ATP = L-phenylalanyl-tRNA(Phe) + AMP + diphosphate + H(+). The polypeptide is Phenylalanine--tRNA ligase alpha subunit (Caldicellulosiruptor saccharolyticus (strain ATCC 43494 / DSM 8903 / Tp8T 6331)).